Here is a 600-residue protein sequence, read N- to C-terminus: Glutamine--fructose-6-phosphate aminotransferase [isomerizing] (600 aa).

Cysteine 2 (nucleophile; for GATase activity) is an active-site residue. Residues 2-217 (CGIVGYIGNE…DEELVIVRRD (216 aa)) enclose the Glutamine amidotransferase type-2 domain. 2 consecutive SIS domains span residues 283 to 422 (IRAA…AAGK) and 452 to 590 (IARD…VDKP). Lysine 595 serves as the catalytic For Fru-6P isomerization activity.

As to quaternary structure, homodimer.

Its subcellular location is the cytoplasm. The catalysed reaction is D-fructose 6-phosphate + L-glutamine = D-glucosamine 6-phosphate + L-glutamate. Catalyzes the first step in hexosamine metabolism, converting fructose-6P into glucosamine-6P using glutamine as a nitrogen source. The chain is Glutamine--fructose-6-phosphate aminotransferase [isomerizing] from Shouchella clausii (strain KSM-K16) (Alkalihalobacillus clausii).